We begin with the raw amino-acid sequence, 336 residues long: Formimidoylglutamase (336 aa).

The span at 1–10 shows a compositional bias: polar residues; it reads MNPNFTTEHT. Residues 1-22 are disordered; sequence MNPNFTTEHTWQGRHDPEDGQA. The segment covering 11-22 has biased composition (basic and acidic residues); sequence WQGRHDPEDGQA. Mn(2+) contacts are provided by H127, D157, H159, D161, D254, and D256.

The protein belongs to the arginase family. Requires Mn(2+) as cofactor.

The catalysed reaction is N-formimidoyl-L-glutamate + H2O = formamide + L-glutamate. Its pathway is amino-acid degradation; L-histidine degradation into L-glutamate; L-glutamate from N-formimidoyl-L-glutamate (hydrolase route): step 1/1. Functionally, catalyzes the conversion of N-formimidoyl-L-glutamate to L-glutamate and formamide. This chain is Formimidoylglutamase, found in Vibrio cholerae serotype O1 (strain ATCC 39541 / Classical Ogawa 395 / O395).